Here is a 291-residue protein sequence, read N- to C-terminus: Prolyl 4-hydroxylase 5 (291 aa).

The Cytoplasmic segment spans residues 1-22 (MASKSKQHLRYQPRKSVSRSTQ). Residues 23–43 (AFTVLILLLVVILILLGLGIL) traverse the membrane as a helical; Signal-anchor for type II membrane protein segment. The Extracellular segment spans residues 44 to 291 (SLPNANRNSS…KWFHVHEFKV (248 aa)). Asn51 carries N-linked (GlcNAc...) asparagine glycosylation. The region spanning 163–286 (NGEGLQVLHY…KWSSTKWFHV (124 aa)) is the Fe2OG dioxygenase domain. Residues His181 and Asp183 each coordinate Fe cation. N-linked (GlcNAc...) asparagine glycosylation is present at Asn222. His267 is a binding site for Fe cation. Lys277 contacts 2-oxoglutarate.

Belongs to the P4HA family. The cofactor is Fe(2+). L-ascorbate serves as cofactor. In terms of tissue distribution, expressed in epidermal root hair cells (trichoblasts).

It localises to the endoplasmic reticulum membrane. The protein localises to the golgi apparatus membrane. The enzyme catalyses L-prolyl-[collagen] + 2-oxoglutarate + O2 = trans-4-hydroxy-L-prolyl-[collagen] + succinate + CO2. In terms of biological role, catalyzes the post-translational formation of 4-hydroxyproline in -Xaa-Pro-Gly- sequences in proline-rich peptide sequences of plant glycoproteins and other proteins. Hydroxyprolines are important constituent of many plant cell wall glycoproteins such as extensins, hydroxyproline-rich glycoproteins, lectins and arabinogalactan proteins. Possesses high affinity for leucine-rich repeat and proline-rich extensins of root cell walls that are essential for root hair development. Hydroxyprolines define the subsequent O-glycosylation sites by arabinosyltransferases which elongate the O-arabinosides on extensins. The sequence is that of Prolyl 4-hydroxylase 5 from Arabidopsis thaliana (Mouse-ear cress).